Here is a 225-residue protein sequence, read N- to C-terminus: Probable iron export ATP-binding protein FetA (225 aa).

The region spanning 8–225 (LQLQNVGYLA…EMQEARYELA (218 aa)) is the ABC transporter domain. 40 to 47 (GPSGCGKS) contributes to the ATP binding site.

Belongs to the ABC transporter superfamily. In terms of assembly, the complex is composed of two ATP-binding proteins (FetA) and two transmembrane proteins (FetB).

It is found in the cell inner membrane. Part of the ABC transporter complex FetAB, which is probably involved in iron export and enhances resistance to H(2)O(2)-mediated oxidative stress. Probably responsible for energy coupling to the transport system. This is Probable iron export ATP-binding protein FetA (fetA) from Escherichia coli (strain K12).